Consider the following 404-residue polypeptide: Cysteine desulfurase IscS (404 aa).

Residues 75–76 (AT), N155, Q183, and 203–205 (SAH) contribute to the pyridoxal 5'-phosphate site. K206 is subject to N6-(pyridoxal phosphate)lysine. Residue T243 coordinates pyridoxal 5'-phosphate. C328 acts as the Cysteine persulfide intermediate in catalysis. C328 is a binding site for [2Fe-2S] cluster.

Belongs to the class-V pyridoxal-phosphate-dependent aminotransferase family. NifS/IscS subfamily. Homodimer. Forms a heterotetramer with IscU, interacts with other sulfur acceptors. Requires pyridoxal 5'-phosphate as cofactor.

Its subcellular location is the cytoplasm. It catalyses the reaction (sulfur carrier)-H + L-cysteine = (sulfur carrier)-SH + L-alanine. It functions in the pathway cofactor biosynthesis; iron-sulfur cluster biosynthesis. Its function is as follows. Master enzyme that delivers sulfur to a number of partners involved in Fe-S cluster assembly, tRNA modification or cofactor biosynthesis. Catalyzes the removal of elemental sulfur atoms from cysteine to produce alanine. Functions as a sulfur delivery protein for Fe-S cluster synthesis onto IscU, an Fe-S scaffold assembly protein, as well as other S acceptor proteins. The protein is Cysteine desulfurase IscS of Azotobacter vinelandii (strain DJ / ATCC BAA-1303).